Reading from the N-terminus, the 110-residue chain is ATP-dependent Clp protease adapter protein ClpS 2 (110 aa).

The disordered stretch occupies residues 1–24 (MSNDENRSGSPTGPNTSVITKVKP). A compositionally biased stretch (polar residues) spans 8-19 (SGSPTGPNTSVI).

Belongs to the ClpS family. As to quaternary structure, binds to the N-terminal domain of the chaperone ClpA.

Functionally, involved in the modulation of the specificity of the ClpAP-mediated ATP-dependent protein degradation. This chain is ATP-dependent Clp protease adapter protein ClpS 2, found in Bradyrhizobium diazoefficiens (strain JCM 10833 / BCRC 13528 / IAM 13628 / NBRC 14792 / USDA 110).